The primary structure comprises 467 residues: Sodium-dependent phosphate transport protein 1 (467 aa).

Asparagine 41, asparagine 49, and asparagine 58 each carry an N-linked (GlcNAc...) asparagine glycan. 10 helical membrane passes run 81-101 (GIILSSTSYGVIIIQVPVGYF), 119-139 (SVLSLLIPPAAGIGVAWVVVC), 178-198 (FLLGPFIVLLVTGVICESLGW), 200-220 (MVFYIFGACGCAVCLLWFVLF), 257-277 (AILKSLPVWAISTGSFTFFWS), 301-321 (GFLSSLPYLFAWICGNLAGQL), 339-359 (LFTAAGFLLPAIFGVCLPYLS), 365-385 (IVIFLILAGATGSFCLGGVFI), 401-421 (CSTLTGMIGGLIASTLTGLIL), and 433-453 (FILMAAINVTGLIFYLIVATA).

This sequence belongs to the major facilitator superfamily. Sodium/anion cotransporter family. In terms of assembly, interacts with PDZK1. Expressed in kidney cortex, liver and brain but not in other tissues.

Its subcellular location is the apical cell membrane. It carries out the reaction 3 Na(+)(out) + phosphate(out) = 3 Na(+)(in) + phosphate(in). The enzyme catalyses urate(out) = urate(in). Important for the resorption of phosphate by the kidney. May be involved in actively transporting phosphate into cells via Na(+) cotransport in the renal brush border membrane. Plays a role in urate transport in the kidney. The sequence is that of Sodium-dependent phosphate transport protein 1 (SLC17A1) from Homo sapiens (Human).